Consider the following 62-residue polypeptide: Conorfamide-Tx1 (62 aa).

Residues 1–19 (MSGRGFLLLALLLLVTVEA) form the signal peptide. A propeptide spanning residues 20 to 26 (TKVEKNK) is cleaved from the precursor. Y46 carries the post-translational modification Tyrosine amide. Positions 47 to 62 (GRRDMQSPLLSERLRF) are excised as a propeptide.

The protein belongs to the FARP (FMRFamide related peptide) family. In terms of tissue distribution, expressed by the venom duct.

The protein localises to the secreted. In terms of biological role, this peptide does not show activity on human and mouse sensory neuron-specific G-protein coupled receptors MRGPRX1. The protein is Conorfamide-Tx1 of Conus textile (Cloth-of-gold cone).